Consider the following 119-residue polypeptide: MAARIAGVNIPVQKHARIALQAIYGIGNSRALEICKEAKIDPATKVKDLSEAELDALRTEVGKFSVEGDLRRERSMDIKRKMDLGAYEGIRHRRGLPLRGQRTRSNARTRKGKRKPIRS.

A disordered region spans residues 93–119 (RRGLPLRGQRTRSNARTRKGKRKPIRS).

This sequence belongs to the universal ribosomal protein uS13 family. Part of the 30S ribosomal subunit. Forms a loose heterodimer with protein S19. Forms two bridges to the 50S subunit in the 70S ribosome.

Its function is as follows. Located at the top of the head of the 30S subunit, it contacts several helices of the 16S rRNA. In the 70S ribosome it contacts the 23S rRNA (bridge B1a) and protein L5 of the 50S subunit (bridge B1b), connecting the 2 subunits; these bridges are implicated in subunit movement. Contacts the tRNAs in the A and P-sites. The protein is Small ribosomal subunit protein uS13 of Coxiella burnetii (strain RSA 493 / Nine Mile phase I).